Here is a 219-residue protein sequence, read N- to C-terminus: Deoxyribose-phosphate aldolase 1 (219 aa).

Residue Asp87 is the Proton donor/acceptor of the active site. The active-site Schiff-base intermediate with acetaldehyde is Lys149. The Proton donor/acceptor role is filled by Lys178.

Belongs to the DeoC/FbaB aldolase family. DeoC type 1 subfamily.

The protein localises to the cytoplasm. It catalyses the reaction 2-deoxy-D-ribose 5-phosphate = D-glyceraldehyde 3-phosphate + acetaldehyde. The protein operates within carbohydrate degradation; 2-deoxy-D-ribose 1-phosphate degradation; D-glyceraldehyde 3-phosphate and acetaldehyde from 2-deoxy-alpha-D-ribose 1-phosphate: step 2/2. Functionally, catalyzes a reversible aldol reaction between acetaldehyde and D-glyceraldehyde 3-phosphate to generate 2-deoxy-D-ribose 5-phosphate. The protein is Deoxyribose-phosphate aldolase 1 of Vibrio vulnificus (strain YJ016).